We begin with the raw amino-acid sequence, 476 residues long: Methylenetetrahydrofolate--tRNA-(uracil-5-)-methyltransferase TrmFO (476 aa).

Position 14 to 19 (14 to 19 (GGGLAG)) interacts with FAD.

This sequence belongs to the MnmG family. TrmFO subfamily. Requires FAD as cofactor.

It is found in the cytoplasm. It carries out the reaction uridine(54) in tRNA + (6R)-5,10-methylene-5,6,7,8-tetrahydrofolate + NADH + H(+) = 5-methyluridine(54) in tRNA + (6S)-5,6,7,8-tetrahydrofolate + NAD(+). The catalysed reaction is uridine(54) in tRNA + (6R)-5,10-methylene-5,6,7,8-tetrahydrofolate + NADPH + H(+) = 5-methyluridine(54) in tRNA + (6S)-5,6,7,8-tetrahydrofolate + NADP(+). Functionally, catalyzes the folate-dependent formation of 5-methyl-uridine at position 54 (M-5-U54) in all tRNAs. In Brucella anthropi (strain ATCC 49188 / DSM 6882 / CCUG 24695 / JCM 21032 / LMG 3331 / NBRC 15819 / NCTC 12168 / Alc 37) (Ochrobactrum anthropi), this protein is Methylenetetrahydrofolate--tRNA-(uracil-5-)-methyltransferase TrmFO.